The chain runs to 179 residues: Natural killer cells antigen CD94 (179 aa).

Residues 1–10 lie on the Cytoplasmic side of the membrane; that stretch reads MAVFKTTLWW. The chain crosses the membrane as a helical; Signal-anchor for type II membrane protein span at residues 11–31; that stretch reads LISGTLGIICLSLTATLGILL. At 32-179 the chain is on the extracellular side; it reads KNSFTKLSIE…NRYICKQQLI (148 aa). Intrachain disulfides connect cysteine 58-cysteine 70 and cysteine 61-cysteine 72. A C-type lectin domain is found at 68 to 175; the sequence is YRCNCYFISS…CEDKNRYICK (108 aa). 2 N-linked (GlcNAc...) asparagine glycosylation sites follow: asparagine 83 and asparagine 132. Cystine bridges form between cysteine 89-cysteine 174 and cysteine 152-cysteine 166.

In terms of assembly, can form disulfide-bonded heterodimer with NKG2 family members KLRC1 and KLRC2. KLRD1-KLRC1 heterodimer interacts with peptide-bound MHC-E-B2M heterotrimeric complex. KLRD1 plays a prominent role in directly interacting with MHC-E. KLRD1-KLRC1 interacts with much higher affinity with peptide-bound MHC-E-B2M than KLRD1-KLRC2. Interacts with the adapter protein TYROBP/DAP12; this interaction is required for cell surface expression and cell activation. In terms of tissue distribution, natural killer cells.

The protein localises to the cell membrane. Functionally, immune receptor involved in self-nonself discrimination. In complex with KLRC1 or KLRC2 on cytotoxic and regulatory lymphocyte subsets, recognizes non-classical major histocompatibility (MHC) class Ib molecule MHC-E loaded with self-peptides derived from the signal sequence of classical MHC class Ia and non-classical MHC class Ib molecules. Enables cytotoxic cells to monitor the expression of MHC class I molecules in healthy cells and to tolerate self. Primarily functions as a ligand binding subunit as it lacks the capacity to signal. Its function is as follows. KLRD1-KLRC1 acts as an immune inhibitory receptor. Key inhibitory receptor on natural killer (NK) cells that regulates their activation and effector functions. Dominantly counteracts T cell receptor signaling on a subset of memory/effector CD8-positive T cells as part of an antigen-driven response to avoid autoimmunity. On intraepithelial CD8-positive gamma-delta regulatory T cells triggers TGFB1 secretion, which in turn limits the cytotoxic programming of intraepithelial CD8-positive alpha-beta T cells, distinguishing harmless from pathogenic antigens. In MHC-E-rich tumor microenvironment, acts as an immune inhibitory checkpoint and may contribute to progressive loss of effector functions of NK cells and tumor-specific T cells, a state known as cell exhaustion. Upon MHC-E-peptide binding, transmits intracellular signals through KLRC1 immunoreceptor tyrosine-based inhibition motifs (ITIMs) by recruiting INPP5D/SHIP-1 and INPPL1/SHIP-2 tyrosine phosphatases to ITIMs, and ultimately opposing signals transmitted by activating receptors through dephosphorylation of proximal signaling molecules. In terms of biological role, KLRD1-KLRC2 acts as an immune activating receptor. On cytotoxic lymphocyte subsets recognizes MHC-E loaded with signal sequence-derived peptides from non-classical MHC class Ib MHC-G molecules, likely playing a role in the generation and effector functions of adaptive NK cells and in maternal-fetal tolerance during pregnancy. Regulates the effector functions of terminally differentiated cytotoxic lymphocyte subsets, and in particular may play a role in adaptive NK cell response to viral infection. Upon MHC-E-peptide binding, transmits intracellular signals via the adapter protein TYROBP/DAP12, triggering the phosphorylation of proximal signaling molecules and cell activation. The protein is Natural killer cells antigen CD94 (KLRD1) of Pongo pygmaeus (Bornean orangutan).